Reading from the N-terminus, the 145-residue chain is Lysozyme-like protein 4 (145 aa).

The signal sequence occupies residues 1–19 (MQLYLVLLLISYLLTPIGA). The 126-residue stretch at 20–145 (SILGRCVVAK…LDRWLDGCEL (126 aa)) folds into the C-type lysozyme domain. 4 disulfides stabilise this stretch: Cys-25/Cys-143, Cys-49/Cys-130, Cys-84/Cys-95, and Cys-91/Cys-109. The active site involves Glu-54.

It belongs to the glycosyl hydrolase 22 family. Monomer. Expressed in the brain, lung, ovary, uterus and testis. In testis expressed in the germinal epithelium and on the maturing spermatozoa (at protein level).

It is found in the secreted. The protein resides in the cytoplasmic vesicle. Its subcellular location is the secretory vesicle. The protein localises to the acrosome. It localises to the cell projection. It is found in the cilium. The protein resides in the flagellum. In terms of biological role, may be involved in fertilization. Has no detectable bacteriolytic and lysozyme activities in vitro. In Rattus norvegicus (Rat), this protein is Lysozyme-like protein 4 (Lyzl4).